The sequence spans 1025 residues: Dihydropyrimidine dehydrogenase [NADP(+)] (1025 aa).

The 32-residue stretch at 69-100 (ERGALREAVRCLKCADAPCQKSCPTSLDIKSF) folds into the 4Fe-4S ferredoxin-type 1 domain. 4 residues coordinate [4Fe-4S] cluster: Cys79, Cys82, Cys87, and Cys91. Position 129 (Val129) interacts with FAD. 4 residues coordinate [4Fe-4S] cluster: Cys130, Cys136, Cys140, and Gln156. Residues 194–198 (GAGPA), 218–226 (EKQEYVGGL), and Arg235 each bind FAD. NADP(+) is bound by residues 340–343 (AGDT), 364–365 (RK), and Arg371. An N6-acetyllysine modification is found at Lys384. Residues 437-439 (PFG) and 481-487 (DVVGMAN) contribute to the NADP(+) site. 480 to 489 (GDVVGMANTT) is an FAD binding site. Residues Ser550 and 574-575 (KT) each bind FMN. Substrate-binding positions include Asn609 and 668 to 670 (NLS). Residue Cys671 is the Proton acceptor of the active site. Residue Lys709 coordinates FMN. A substrate-binding site is contributed by 736–737 (NT). FMN is bound by residues Gly767, 793-795 (TGG), and 816-817 (CS). Residue Ser905 is modified to Phosphoserine. 4Fe-4S ferredoxin-type domains lie at 944–976 (VVAL…FDPE) and 978–1007 (HLPT…MVSR). [4Fe-4S] cluster contacts are provided by Cys953, Cys956, Cys959, Cys963, Cys986, Cys989, Cys992, and Cys996.

The protein belongs to the dihydropyrimidine dehydrogenase family. As to quaternary structure, homodimer. The cofactor is FAD. FMN is required as a cofactor. [4Fe-4S] cluster serves as cofactor.

It localises to the cytoplasm. It catalyses the reaction 5,6-dihydrouracil + NADP(+) = uracil + NADPH + H(+). The catalysed reaction is 5,6-dihydrothymine + NADP(+) = thymine + NADPH + H(+). It functions in the pathway amino-acid biosynthesis; beta-alanine biosynthesis. Inactivated by 5-iodouracil. Involved in pyrimidine base degradation. Catalyzes the reduction of uracil and thymine. Also involved the degradation of the chemotherapeutic drug 5-fluorouracil. This Rattus norvegicus (Rat) protein is Dihydropyrimidine dehydrogenase [NADP(+)].